We begin with the raw amino-acid sequence, 346 residues long: Protein RecA (346 aa).

65–72 (GPESSGKT) contacts ATP.

The protein belongs to the RecA family.

Its subcellular location is the cytoplasm. Can catalyze the hydrolysis of ATP in the presence of single-stranded DNA, the ATP-dependent uptake of single-stranded DNA by duplex DNA, and the ATP-dependent hybridization of homologous single-stranded DNAs. It interacts with LexA causing its activation and leading to its autocatalytic cleavage. The protein is Protein RecA of Enterococcus mundtii.